The following is a 439-amino-acid chain: Packaging protein 1 (439 aa).

The segment covering 1-23 has biased composition (polar residues); that stretch reads MSTQIPARQETYDPSQSSGTKTP. The disordered stretch occupies residues 1–42; that stretch reads MSTQIPARQETYDPSQSSGTKTPSHPYDGNPTRSYPKRNAGK. 151–158 contacts ATP; the sequence is GPTGSGKS. The tract at residues 419–439 is DNA-binding; sequence ERNPKLTDLEKLSPPGTFQET.

Belongs to the adenoviridae packaging protein 1 family. Homodimer. Part of a genome packaging complex composed of packaging proteins 1, 2 and 3; this complex specifically binds to the packaging sequence on the left end of viral genomic DNA and performs packaging of the viral genome. Interacts with protein 33K.

Its subcellular location is the virion. It localises to the host nucleus. The protein localises to the host nucleoplasm. It is found in the host nucleolus. Functionally, component of the packaging machinery which encapsidates the viral DNA into preformed capsids and transcriptional activator of the viral major late promoter (MLP). Binds, along with packaging proteins 2 and 3, to the specific packaging sequence on the left end of viral genomic DNA and displays ATPase activity thereby providing the power stroke of the packaging machinery. The activity of packaging protein IVa2 is stimulated by protein 33K which acts as a terminase. May be the protein that pumps DNA into the capsid powered by ATP hydrolysis. Specifically binds to the 5'-CG-3' nucleotides of the repeats making up the packaging sequence. Component of the DEF-A and DEF-B transcription factors that bind downstream elements of the major late promoter (MLP), and stimulate transcription from the MLP after initiation of viral DNA replication. DEF-A is a heterodimer packaging proteins 1 and 2 and DEF-B is a homodimer of packaging protein 1. In Fowl adenovirus A serotype 1 (strain CELO / Phelps) (FAdV-1), this protein is Packaging protein 1.